Consider the following 389-residue polypeptide: Tryptophan 2,3-dioxygenase (389 aa).

Residues 60–64 (FIITH) and R131 contribute to the substrate site. H316 lines the heme pocket. T331 serves as a coordination point for substrate.

It belongs to the tryptophan 2,3-dioxygenase family. In terms of assembly, homotetramer. Dimer of dimers. Heme is required as a cofactor.

The enzyme catalyses L-tryptophan + O2 = N-formyl-L-kynurenine. Its pathway is amino-acid degradation; L-tryptophan degradation via kynurenine pathway; L-kynurenine from L-tryptophan: step 1/2. The protein operates within pigment biosynthesis; ommochrome biosynthesis. Functionally, heme-dependent dioxygenase that catalyzes the oxidative cleavage of the L-tryptophan (L-Trp) pyrrole ring and converts L-tryptophan to N-formyl-L-kynurenine. Catalyzes the oxidative cleavage of the indole moiety. This chain is Tryptophan 2,3-dioxygenase, found in Mayetiola destructor (Hessian fly).